A 448-amino-acid polypeptide reads, in one-letter code: T-box transcription factor T homolog 1 (448 aa).

The T-box DNA-binding region spans 54 to 224 (LWDKFNALTN…YNPFAKAFLD (171 aa)). 2 disordered regions span residues 290-312 (APYP…TAAS) and 401-448 (TTAS…PPSL). The segment covering 417 to 442 (STDSGYGHSTTPPAPQTRITSNNWSP) has biased composition (polar residues).

It is found in the nucleus. Its function is as follows. Involved in the transcriptional regulation of genes required for mesoderm formation and differentiation. This Branchiostoma floridae (Florida lancelet) protein is T-box transcription factor T homolog 1.